Here is a 439-residue protein sequence, read N- to C-terminus: Probable threonine protease PRSS50 (439 aa).

Disordered stretches follow at residues 1–22 and 48–130; these read MEPW…VPGA and ERIR…TMAP. A signal peptide spans 1-47; the sequence is MEPWCGAEVRGQGPQGPRVPGASRSRSRALLLLLLLLLLLLPRRPAG. Residues 9–21 are compositionally biased toward low complexity; that stretch reads VRGQGPQGPRVPG. Residues 48–415 are Extracellular-facing; the sequence is ERIRPRRPPR…WIWDRLSGEP (368 aa). The segment covering 51 to 61 has biased composition (basic residues); the sequence is RPRRPPRHAHP. Positions 112-127 are enriched in low complexity; sequence QAQTNQTTTAPPNSQT. 2 N-linked (GlcNAc...) asparagine glycosylation sites follow: asparagine 116 and asparagine 187. The region spanning 157–412 is the Peptidase S1 domain; sequence FCGSSHEPDP…YRPWIWDRLS (256 aa). Cysteine 192 and cysteine 208 are oxidised to a cystine. Histidine 207 (charge relay system) is an active-site residue. A glycan (N-linked (GlcNAc...) asparagine) is linked at asparagine 226. Aspartate 260 functions as the Charge relay system in the catalytic mechanism. Disulfide bonds link cysteine 294-cysteine 370, cysteine 327-cysteine 350, and cysteine 360-cysteine 388. Catalysis depends on threonine 364, which acts as the Charge relay system. Residues 416–436 form a helical membrane-spanning segment; that stretch reads LALPAPSRTLLLAFLLLLILL. The Cytoplasmic portion of the chain corresponds to 437-439; it reads GTL.

The protein belongs to the peptidase S1 family.

The protein resides in the membrane. In terms of biological role, may be involved in proteolysis through its threonine endopeptidase activity. The sequence is that of Probable threonine protease PRSS50 (Prss50) from Mus musculus (Mouse).